A 255-amino-acid chain; its full sequence is U2 small nuclear ribonucleoprotein A' (255 aa).

LRR repeat units follow at residues 20-41 (RDRE…GATL), 43-64 (QFDA…PLLR), 65-86 (RLKT…LDQA), and 89-110 (CLTE…DPLA). The LRRCT domain maps to 123–161 (NPVTNKKHYRLYVIYKVPQVRVLDFQKVKLKERQEAEKM). N6-acetyllysine; alternate is present on K172. A Glycyl lysine isopeptide (Lys-Gly) (interchain with G-Cter in SUMO2); alternate cross-link involves residue K172. Positions 174 to 201 (IARRSKTFNPGAGLPTDKKKGGPSPGDV) are disordered. S178 and S197 each carry phosphoserine. Residue K221 forms a Glycyl lysine isopeptide (Lys-Gly) (interchain with G-Cter in SUMO2) linkage. Residues 222–255 (GLLQSGQIPGRERRSGPTDDGEEEMEEDTVTNGS) form a disordered region. 2 positions are modified to phosphoserine: S236 and S255. Residues 240-255 (DDGEEEMEEDTVTNGS) are compositionally biased toward acidic residues.

The protein belongs to the U2 small nuclear ribonucleoprotein A family. Identified in the spliceosome B complex. Identified in the spliceosome C complex. Found in a pre-mRNA splicing complex with SFRS4, SFRS5, SNRNP70, SNRPA1, SRRM1 and SRRM2. Found in a pre-mRNA exonic splicing enhancer (ESE) complex with SNRNP70, SNRPA1, SRRM1 and TRA2B. Contributes to the binding of stem loop IV of U2 snRNA with SNRPB2.

The protein localises to the nucleus. Functionally, involved in pre-mRNA splicing as component of the spliceosome. Associated with sn-RNP U2, where it contributes to the binding of stem loop IV of U2 snRNA. This is U2 small nuclear ribonucleoprotein A' (SNRPA1) from Homo sapiens (Human).